We begin with the raw amino-acid sequence, 448 residues long: Na(+)-malate symporter (448 aa).

Transmembrane regions (helical) follow at residues 31 to 51, 60 to 80, 86 to 106, 123 to 143, 153 to 173, 182 to 202, 214 to 234, 276 to 293, 297 to 319, 333 to 353, and 359 to 379; these read IGVIPLPLYTVLAVIIILAAY, LGGFAIIMILGVFLGDIGQRI, IGGPAILSLFVPSFLVFYNVL, FLYFYIACLVVGSILGMNRIV, VPLVAGTIAAVAAGILVGFIF, FFVVVPIIAGGIGEGILPLSI, VFVSQLVPAAIIGNVFAIICA, LMGAGVLLACTFFIFGGL, FIFIPGAILMIISAAAVKYANIL, FISSSFTWPLMVGLGILFIPL, and VISIPFVIICISVVIAMIGSG.

Belongs to the 2-hydroxycarboxylate transporter (2-HCT) (TC 2.A.24) family.

It localises to the cell membrane. Acts as a Na(+)-malate symporter, as it catalyzes malate-dependent uptake of Na(+) and Na(+)-dependent uptake of malate. The protein is Na(+)-malate symporter of Bacillus subtilis (strain 168).